We begin with the raw amino-acid sequence, 184 residues long: Protein CPn_0803/CP_1068/CPj0803/CpB0832 (184 aa).

Belongs to the chlamydial CPn_0803/CT_584/TC_0873 family.

The sequence is that of Protein CPn_0803/CP_1068/CPj0803/CpB0832 from Chlamydia pneumoniae (Chlamydophila pneumoniae).